Reading from the N-terminus, the 172-residue chain is Myosin regulatory light chain 12B (172 aa).

The segment covering 1-16 has biased composition (basic residues); sequence MSSKKAKTKTTKKRPQ. The segment at 1 to 20 is disordered; it reads MSSKKAKTKTTKKRPQRATS. Phosphothreonine; by MLCK and ZIPK/DAPK3 is present on T19. At S20 the chain carries Phosphoserine; by MLCK and ZIPK/DAPK3. EF-hand domains lie at 29–64, 98–133, and 134–169; these read SQIQ…LGKN, DPED…MGDR, and FTDE…GAKD. Ca(2+) is bound by residues D42, N44, D46, and D53.

Myosin is a hexamer of 2 heavy chains and 4 light chains: interacts with myosin heavy chain MYO19. In terms of processing, phosphorylation increases the actin-activated myosin ATPase activity and thereby regulates the contractile activity. It is required to generate the driving force in the migration of the cells but not necessary for localization of myosin-2 at the leading edge. Phosphorylation is reduced following epigallocatechin-3-O-gallate treatment.

Functionally, myosin regulatory subunit that plays an important role in regulation of both smooth muscle and nonmuscle cell contractile activity via its phosphorylation. Phosphorylation triggers actin polymerization in vascular smooth muscle. Implicated in cytokinesis, receptor capping, and cell locomotion. This Rattus norvegicus (Rat) protein is Myosin regulatory light chain 12B (Myl12b).